The sequence spans 114 residues: Small nuclear ribonucleoprotein SmD1a (114 aa).

Positions 2–74 (KLVRFLMKLN…IRYYILPDSL (73 aa)) constitute a Sm domain. Positions 87 to 114 (VKPKKPVAGKAVGRGRGRGRGRGRGRGR) are disordered. Tandem repeats lie at residues 99–100 (GR), 101–102 (GR), 103–104 (GR), 105–106 (GR), 107–108 (GR), 109–110 (GR), 111–112 (GR), and 113–114 (GR). The tract at residues 99 to 114 (GRGRGRGRGRGRGRGR) is 8 X 2 AA tandem repeats of G-R.

This sequence belongs to the snRNP core protein family.

Its subcellular location is the nucleus. The protein resides in the nucleus speckle. The protein localises to the nucleolus. Functionally, involved in splicing regulation. Facilitates post-transcriptional gene silencing (PTGS) by limiting the degradation of transgene aberrant RNAs by the RNA quality control (RQC) machinery, thus favoring their entry into cytoplasmic siRNA bodies where they can trigger PTGS. Does not participate in the production of small RNAs. In Arabidopsis thaliana (Mouse-ear cress), this protein is Small nuclear ribonucleoprotein SmD1a.